Consider the following 195-residue polypeptide: Sec-independent protein translocase protein TatB (195 aa).

The chain crosses the membrane as a helical span at residues 1–21; the sequence is MFDIGFSELVLIFIVGLVVLG. Residues 166–195 are disordered; it reads DESQFAAYYPPDDDLASPTPSQPQDKQNVS. The span at 183–195 shows a compositional bias: polar residues; it reads PTPSQPQDKQNVS.

It belongs to the TatB family. The Tat system comprises two distinct complexes: a TatABC complex, containing multiple copies of TatA, TatB and TatC subunits, and a separate TatA complex, containing only TatA subunits. Substrates initially bind to the TatABC complex, which probably triggers association of the separate TatA complex to form the active translocon.

The protein localises to the cell inner membrane. Functionally, part of the twin-arginine translocation (Tat) system that transports large folded proteins containing a characteristic twin-arginine motif in their signal peptide across membranes. Together with TatC, TatB is part of a receptor directly interacting with Tat signal peptides. TatB may form an oligomeric binding site that transiently accommodates folded Tat precursor proteins before their translocation. The polypeptide is Sec-independent protein translocase protein TatB (Actinobacillus pleuropneumoniae serotype 5b (strain L20)).